We begin with the raw amino-acid sequence, 190 residues long: Large ribosomal subunit protein bL25 (190 aa).

Belongs to the bacterial ribosomal protein bL25 family. CTC subfamily. In terms of assembly, part of the 50S ribosomal subunit; part of the 5S rRNA/L5/L18/L25 subcomplex. Contacts the 5S rRNA. Binds to the 5S rRNA independently of L5 and L18.

In terms of biological role, this is one of the proteins that binds to the 5S RNA in the ribosome where it forms part of the central protuberance. The sequence is that of Large ribosomal subunit protein bL25 from Neisseria meningitidis serogroup C / serotype 2a (strain ATCC 700532 / DSM 15464 / FAM18).